The primary structure comprises 341 residues: GTPase Obg (341 aa).

The Obg domain maps to 1-159 (MKFLDQAKVY…RAIWLRLKLI (159 aa)). One can recognise an OBG-type G domain in the interval 160-327 (ADAGLVGLPN…VLRAGAHIIE (168 aa)). GTP is bound by residues 166 to 173 (GLPNAGKS), 191 to 195 (FTTLH), 212 to 215 (DIPG), 279 to 282 (SQID), and 308 to 310 (SAV). Mg(2+)-binding residues include Ser-173 and Thr-193.

It belongs to the TRAFAC class OBG-HflX-like GTPase superfamily. OBG GTPase family. Monomer. The cofactor is Mg(2+).

The protein localises to the cytoplasm. Functionally, an essential GTPase which binds GTP, GDP and possibly (p)ppGpp with moderate affinity, with high nucleotide exchange rates and a fairly low GTP hydrolysis rate. Plays a role in control of the cell cycle, stress response, ribosome biogenesis and in those bacteria that undergo differentiation, in morphogenesis control. This Bartonella tribocorum (strain CIP 105476 / IBS 506) protein is GTPase Obg.